Consider the following 139-residue polypeptide: Putative truncated protein trichome birefringence-like 46 (139 aa).

The protein belongs to the PC-esterase family. TBL subfamily.

This chain is Putative truncated protein trichome birefringence-like 46 (TBL46), found in Arabidopsis thaliana (Mouse-ear cress).